The primary structure comprises 247 residues: Putative urease accessory protein UreD homolog (247 aa).

Belongs to the UreD family. In terms of assembly, ureD, UreF and UreG form a complex that acts as a GTP-hydrolysis-dependent molecular chaperone, activating the urease apoprotein by helping to assemble the nickel containing metallocenter of UreC. The UreE protein probably delivers the nickel.

The protein localises to the cytoplasm. Its function is as follows. Required for maturation of urease via the functional incorporation of the urease nickel metallocenter. The sequence is that of Putative urease accessory protein UreD homolog from Escherichia coli O157:H7.